Consider the following 264-residue polypeptide: Thymidylate synthase (264 aa).

Arginine 21 provides a ligand contact to dUMP. Histidine 51 provides a ligand contact to (6R)-5,10-methylene-5,6,7,8-tetrahydrofolate. DUMP is bound at residue 126–127 (RR). Cysteine 146 functions as the Nucleophile in the catalytic mechanism. DUMP is bound by residues 166-169 (RSAD), asparagine 177, and 207-209 (HLY). Residue aspartate 169 participates in (6R)-5,10-methylene-5,6,7,8-tetrahydrofolate binding. (6R)-5,10-methylene-5,6,7,8-tetrahydrofolate is bound at residue alanine 263.

This sequence belongs to the thymidylate synthase family. Bacterial-type ThyA subfamily. As to quaternary structure, homodimer.

It localises to the cytoplasm. The enzyme catalyses dUMP + (6R)-5,10-methylene-5,6,7,8-tetrahydrofolate = 7,8-dihydrofolate + dTMP. Its pathway is pyrimidine metabolism; dTTP biosynthesis. Functionally, catalyzes the reductive methylation of 2'-deoxyuridine-5'-monophosphate (dUMP) to 2'-deoxythymidine-5'-monophosphate (dTMP) while utilizing 5,10-methylenetetrahydrofolate (mTHF) as the methyl donor and reductant in the reaction, yielding dihydrofolate (DHF) as a by-product. This enzymatic reaction provides an intracellular de novo source of dTMP, an essential precursor for DNA biosynthesis. This chain is Thymidylate synthase, found in Allorhizobium ampelinum (strain ATCC BAA-846 / DSM 112012 / S4) (Agrobacterium vitis (strain S4)).